Here is a 163-residue protein sequence, read N- to C-terminus: Transcription elongation factor GreB (163 aa).

Positions 54–76 form a coiled coil; the sequence is GKRRMREIDRRIRFLTKRLEAAV.

This sequence belongs to the GreA/GreB family. GreB subfamily.

Functionally, necessary for efficient RNA polymerase transcription elongation past template-encoded arresting sites. The arresting sites in DNA have the property of trapping a certain fraction of elongating RNA polymerases that pass through, resulting in locked ternary complexes. Cleavage of the nascent transcript by cleavage factors such as GreA or GreB allows the resumption of elongation from the new 3'terminus. GreB releases sequences of up to 9 nucleotides in length. The protein is Transcription elongation factor GreB of Neisseria meningitidis serogroup A / serotype 4A (strain DSM 15465 / Z2491).